The primary structure comprises 86 residues: Weak toxin 2 (86 aa).

The N-terminal stretch at 1 to 23 is a signal peptide; it reads MKTLLLTLVVVAIVCLDLGYTLT. 5 cysteine pairs are disulfide-bonded: cysteine 24–cysteine 45, cysteine 27–cysteine 32, cysteine 38–cysteine 63, cysteine 67–cysteine 78, and cysteine 79–cysteine 84.

The protein belongs to the three-finger toxin family. Ancestral subfamily. Orphan group II sub-subfamily. As to expression, expressed by the venom gland.

Its subcellular location is the secreted. In terms of biological role, binds with low affinity to muscular (alpha-1-beta-1-delta-epsilon/CHRNA1-CHRNB1-CHRND-CHRNE) and very low affinity to neuronal (alpha-7/CHRNA7) nicotinic acetylcholine receptor (nAChR). The polypeptide is Weak toxin 2 (Bungarus candidus (Malayan krait)).